A 601-amino-acid polypeptide reads, in one-letter code: Urocanate hydratase (601 aa).

NAD(+) contacts are provided by residues 63–64 (GG) and Gln-141. The tract at residues 172 to 201 (SDRPSALLKQGLSPEGTAPGSGRSSAQVPG) is insert. The tract at residues 179–200 (LKQGLSPEGTAPGSGRSSAQVP) is disordered. NAD(+)-binding positions include 216-218 (GMG), Glu-236, 282-283 (NA), 307-311 (QTSAH), 317-318 (YL), and Tyr-368. Cys-456 is a catalytic residue. Residue Gly-538 participates in NAD(+) binding.

Belongs to the urocanase family. The cofactor is NAD(+).

It localises to the cytoplasm. It catalyses the reaction 4-imidazolone-5-propanoate = trans-urocanate + H2O. The protein operates within amino-acid degradation; L-histidine degradation into L-glutamate; N-formimidoyl-L-glutamate from L-histidine: step 2/3. Functionally, catalyzes the conversion of urocanate to 4-imidazolone-5-propionate. The sequence is that of Urocanate hydratase from Ralstonia nicotianae (strain ATCC BAA-1114 / GMI1000) (Ralstonia solanacearum).